A 577-amino-acid polypeptide reads, in one-letter code: Protein NRT1/ PTR FAMILY 6.2 (577 aa).

12 consecutive transmembrane segments (helical) span residues 28–48 (WITA…TMGI), 74–94 (FMGT…SFLG), 96–116 (FKTI…LAVA), 134–154 (IPAT…IALG), 183–203 (FFFN…VTVL), 214–234 (WAYG…LCGT), 332–352 (LLPI…MITF), 369–389 (IPAG…LAVY), 409–429 (LQRI…AALV), 447–467 (ISVF…AFIY), 488–508 (GLFL…VSIV), and 535–555 (WLLV…ALWF).

This sequence belongs to the major facilitator superfamily. Proton-dependent oligopeptide transporter (POT/PTR) (TC 2.A.17) family. As to expression, expressed in shoots, leaves, flowers and siliques. Expressed in leaf petiole.

The protein resides in the membrane. Low-affinity proton-dependent nitrate transporter. Not involved in dipeptides transport. This chain is Protein NRT1/ PTR FAMILY 6.2 (NPF6.2), found in Arabidopsis thaliana (Mouse-ear cress).